We begin with the raw amino-acid sequence, 765 residues long: Probable ATP-dependent RNA helicase DDX27 (765 aa).

Residues Ser-23, Ser-25, and Ser-48 each carry the phosphoserine modification. Residues Leu-43 to Thr-63 are compositionally biased toward acidic residues. Disordered regions lie at residues Leu-43 to Ala-83 and Lys-111 to Asp-179. The Required for interaction with the PEBOW complex signature appears at Phe-55 to Phe-57. Over residues Glu-129–Asp-156 the composition is skewed to basic and acidic residues. Phosphoserine occurs at positions 135 and 146. Acidic residues predominate over residues Thr-157–Glu-172. Residues Lys-164–Lys-169 carry the Nuclear localization signal motif. The Q motif motif lies at Leu-187–Lys-215. A Helicase ATP-binding domain is found at Ile-218–Ile-392. Ala-231–Thr-238 serves as a coordination point for ATP. The DEAD box motif lies at Asp-340–Asp-343. The Helicase C-terminal domain maps to Leu-426–Ile-572. Residues Val-716–Ser-725 show a composition bias toward basic residues.

It belongs to the DEAD box helicase family. DDX27/DRS1 subfamily. In terms of assembly, associates with PeBoW complex, composed of BOP1, PES1 and WDR12. Interacts directly with BOP1 and PES1.

Its subcellular location is the nucleus. The protein localises to the nucleolus. It localises to the chromosome. The enzyme catalyses ATP + H2O = ADP + phosphate + H(+). Its function is as follows. Probable ATP-dependent RNA helicase. Component of the nucleolar ribosomal RNA (rRNA) processing machinery that regulates 3' end formation of ribosomal 47S rRNA. The sequence is that of Probable ATP-dependent RNA helicase DDX27 (DDX27) from Homo sapiens (Human).